The chain runs to 154 residues: Ribonuclease 1 (154 aa).

This sequence belongs to the BetVI family.

Its subcellular location is the cytoplasm. In terms of biological role, catalyzes the two-stage endonucleolytic cleavage to 3'-phosphomononucleotides and 3'-phosphooligonucleotides with 2',3'-cyclic phosphate intermediates. This chain is Ribonuclease 1, found in Panax ginseng (Korean ginseng).